The primary structure comprises 212 residues: Prolactin (212 aa).

An N-terminal signal peptide occupies residues M1 to A24. Cystine bridges form between C70–C185 and C202–C212.

This sequence belongs to the somatotropin/prolactin family.

It localises to the secreted. The polypeptide is Prolactin (prl) (Sparus aurata (Gilthead sea bream)).